A 452-amino-acid chain; its full sequence is Eukaryotic translation initiation factor 3 subunit E (452 aa).

Residues methionine 1–threonine 17 show a composition bias toward polar residues. The interval methionine 1–serine 23 is disordered. The region spanning proline 246–serine 426 is the PCI domain.

Belongs to the eIF-3 subunit E family. In terms of assembly, component of the eukaryotic translation initiation factor 3 (eIF-3) complex.

Its subcellular location is the cytoplasm. Component of the eukaryotic translation initiation factor 3 (eIF-3) complex, which is involved in protein synthesis of a specialized repertoire of mRNAs and, together with other initiation factors, stimulates binding of mRNA and methionyl-tRNAi to the 40S ribosome. The eIF-3 complex specifically targets and initiates translation of a subset of mRNAs involved in cell proliferation. This Botryotinia fuckeliana (strain B05.10) (Noble rot fungus) protein is Eukaryotic translation initiation factor 3 subunit E (int6).